Here is a 216-residue protein sequence, read N- to C-terminus: Redox-sensing transcriptional repressor Rex 1 (216 aa).

Positions 16 to 55 form a DNA-binding region, H-T-H motif; sequence LYYRYLRMLHDTGKNKVSSTELSEAVQVDSATIRRDFSYF. 90-95 is a binding site for NAD(+); that stretch reads GVGNLG.

The protein belongs to the transcriptional regulatory Rex family. In terms of assembly, homodimer.

The protein resides in the cytoplasm. Modulates transcription in response to changes in cellular NADH/NAD(+) redox state. The sequence is that of Redox-sensing transcriptional repressor Rex 1 from Enterococcus faecalis (strain ATCC 700802 / V583).